The following is a 424-amino-acid chain: MADVDDFDSLSNAELRAKMLAQGLPNIPVTDSSRKVLVKRLRASIGGQASPAASPKKTNRRETLAPAPGAPSAPAAASTPVDKLDGNKVAPATKARRTITAAEAKEPVRRLPEEAIRRRPDEADRLRSEEPVAARKPTTAPAAQPVQTRRTSTSSGSERKVVEPLRKPETIVEQPASSKRADREENYLKVNSLIVLESDEEEDEQLVQAADLVEQEHAARQKTTKLASSGTTTYEYKSKVVEPPRRQVYEATAAPVLPPSVPSARAQTTSSTRSYDYASNPAPGRYSSFVRTAAQGYVTAEAPPVASYSSSYKRTYANELSDDTDSKEDQYESTFARNLARLRAERIGDRISPYSRRTLASGNAGSGSLGYEPRARRSLRPNDNSVSEAFNRWLNSLEQKYHIKSKLFIVLLVLLLIGVYYIFY.

Positions 1 to 30 (MADVDDFDSLSNAELRAKMLAQGLPNIPVT) constitute an LEM domain. Residues 1–50 (MADVDDFDSLSNAELRAKMLAQGLPNIPVTDSSRKVLVKRLRASIGGQAS) are required for binding to Med and germline stem cell maintenance. The disordered stretch occupies residues 42-186 (RASIGGQASP…SSKRADREEN (145 aa)). Phosphoserine is present on residues Ser44, Ser50, and Ser54. Thr63 carries the phosphothreonine modification. Low complexity predominate over residues 65-80 (APAPGAPSAPAAASTP). The Nuclear localization signal motif lies at 92–99 (ATKARRTI). Residues 103 to 133 (EAKEPVRRLPEEAIRRRPDEADRLRSEEPVA) show a composition bias toward basic and acidic residues. A Phosphoserine modification is found at Ser152. Basic and acidic residues predominate over residues 157–170 (SERKVVEPLRKPET). Phosphoserine is present on residues Ser192 and Ser198. The tract at residues 259–278 (PSVPSARAQTTSSTRSYDYA) is disordered. A compositionally biased stretch (low complexity) spans 262-274 (PSARAQTTSSTRS). The tract at residues 271–400 (STRSYDYASN…NRWLNSLEQK (130 aa)) is required for binding to Med. Ser321 carries the phosphoserine modification. A Phosphothreonine modification is found at Thr324. Position 326 is a phosphoserine (Ser326). Residue Thr358 is modified to Phosphothreonine. A phosphoserine mark is found at Ser378 and Ser385. The tract at residues 400 to 424 (KYHIKSKLFIVLLVLLLIGVYYIFY) is essential for nuclear membrane localization and germline stem cell maintenance. The essential for nuclear membrane localization stretch occupies residues 406–424 (KLFIVLLVLLLIGVYYIFY).

In terms of assembly, interacts with Med. Interacts with Lam. Interacts with aurA, alphaTub84B, gammaTub23C and gammaTub37C. Interacts with Nemp. In terms of processing, phosphorylation at Thr-63 by aurA may be required for exit from mitosis. May be phosphorylated by Cdk1 and Pka-C1. In terms of tissue distribution, expressed in all cell types of the germarium and testis. Expressed in nurse cells, follicle cells and oocytes.

The protein localises to the nucleus inner membrane. It is found in the nucleus. It localises to the nucleoplasm. Its subcellular location is the cytoplasm. The protein resides in the chromosome. The protein localises to the cytoskeleton. It is found in the spindle pole. It localises to the microtubule organizing center. Its subcellular location is the centrosome. Its function is as follows. Inner nuclear membrane protein. Involved in the attachment of membrane vesicles to chromatin during nuclear assembly, and is probably required for centrosome maturation and cell cycle progression during mitosis. Essential for differentiation of certain tissues and the maintenance of progenitor cell populations. Required for the differentiation and maintenance of male and female germline stem cells (GSCs), as well as the maintenance of somatic cells in the GSC niche. This role is likely to be independent of the BMP (Dpp) pathway that negatively regulates bam transcription during GSC differentiation. During development, plays essential and redundant functions with the other LEM domain proteins; bocks and MAN1. Also has a redundant but important role with bocks during larval development. The protein is Otefin of Drosophila melanogaster (Fruit fly).